Here is a 315-residue protein sequence, read N- to C-terminus: Nucleotide-binding protein CGSHiEE_06315 (315 aa).

8–15 (GRSGAGKS) serves as a coordination point for ATP. Residue 56 to 59 (DIRN) coordinates GTP.

The protein belongs to the RapZ-like family.

Functionally, displays ATPase and GTPase activities. This Haemophilus influenzae (strain PittEE) protein is Nucleotide-binding protein CGSHiEE_06315.